A 659-amino-acid polypeptide reads, in one-letter code: Alpha-galactosidase D (659 aa).

Residues M1 to A20 form the signal peptide. N-linked (GlcNAc...) asparagine glycosylation is found at N48, N86, and N130. A disulfide bridge links C125 with C158. D156 acts as the Nucleophile in catalysis. N-linked (GlcNAc...) asparagine glycosylation is present at N183. E201–D205 contacts substrate. D223 functions as the Proton donor in the catalytic mechanism. Residues N438, N450, N484, N551, and N583 are each glycosylated (N-linked (GlcNAc...) asparagine).

It belongs to the glycosyl hydrolase 27 family.

It is found in the secreted. The enzyme catalyses Hydrolysis of terminal, non-reducing alpha-D-galactose residues in alpha-D-galactosides, including galactose oligosaccharides, galactomannans and galactolipids.. Hydrolyzes a variety of simple alpha-D-galactoside as well as more complex molecules such as oligosaccharides and polysaccharides. Active on paranitrophenyl-alpha-galactoside but not on raffinose, locust bean gum and gum guar. The protein is Alpha-galactosidase D (aglD) of Emericella nidulans (strain FGSC A4 / ATCC 38163 / CBS 112.46 / NRRL 194 / M139) (Aspergillus nidulans).